Consider the following 304-residue polypeptide: tRNA dimethylallyltransferase (304 aa).

2–9 (GPTASGKT) serves as a coordination point for ATP. 4–9 (TASGKT) serves as a coordination point for substrate. Interaction with substrate tRNA stretches follow at residues 27 to 30 (DSAL), 151 to 155 (QRINR), 232 to 237 (RCVGYR), and 265 to 272 (KRQITWLR).

It belongs to the IPP transferase family. Monomer. It depends on Mg(2+) as a cofactor.

It carries out the reaction adenosine(37) in tRNA + dimethylallyl diphosphate = N(6)-dimethylallyladenosine(37) in tRNA + diphosphate. Catalyzes the transfer of a dimethylallyl group onto the adenine at position 37 in tRNAs that read codons beginning with uridine, leading to the formation of N6-(dimethylallyl)adenosine (i(6)A). In Actinobacillus pleuropneumoniae serotype 7 (strain AP76), this protein is tRNA dimethylallyltransferase.